We begin with the raw amino-acid sequence, 294 residues long: 4-hydroxybenzoate octaprenyltransferase (294 aa).

8 helical membrane-spanning segments follow: residues 24–44 (IGILLLMWPTLWALWLAADGF), 47–67 (LHLIVIFALGTVLMRSAGCVI), 99–119 (LLAAGLSLVSFVLILPLDPLV), 139–159 (FLAIPQAYLGIAFGFGIPMGF), 164–184 (GEVPAIAWLLLLANIFWAVAY), 213–233 (VAAVMLCYAVAFGLIAAVGIA), 238–258 (PWFFGGIAIAAAIAIYHYTLI), and 274–294 (NWVGAVLFVALVIDYVAFPAA).

The protein belongs to the UbiA prenyltransferase family. It depends on Mg(2+) as a cofactor.

The protein localises to the cell inner membrane. The enzyme catalyses all-trans-octaprenyl diphosphate + 4-hydroxybenzoate = 4-hydroxy-3-(all-trans-octaprenyl)benzoate + diphosphate. It participates in cofactor biosynthesis; ubiquinone biosynthesis. In terms of biological role, catalyzes the prenylation of para-hydroxybenzoate (PHB) with an all-trans polyprenyl group. Mediates the second step in the final reaction sequence of ubiquinone-8 (UQ-8) biosynthesis, which is the condensation of the polyisoprenoid side chain with PHB, generating the first membrane-bound Q intermediate 3-octaprenyl-4-hydroxybenzoate. In Aromatoleum aromaticum (strain DSM 19018 / LMG 30748 / EbN1) (Azoarcus sp. (strain EbN1)), this protein is 4-hydroxybenzoate octaprenyltransferase.